The following is a 347-amino-acid chain: Protein RecA (347 aa).

Position 64–71 (64–71 (GPESSGKT)) interacts with ATP.

This sequence belongs to the RecA family.

It is found in the cytoplasm. In terms of biological role, can catalyze the hydrolysis of ATP in the presence of single-stranded DNA, the ATP-dependent uptake of single-stranded DNA by duplex DNA, and the ATP-dependent hybridization of homologous single-stranded DNAs. It interacts with LexA causing its activation and leading to its autocatalytic cleavage. This is Protein RecA from Bacillus velezensis (strain DSM 23117 / BGSC 10A6 / LMG 26770 / FZB42) (Bacillus amyloliquefaciens subsp. plantarum).